The primary structure comprises 387 residues: 3-ketoacyl-CoA thiolase (387 aa).

C91 functions as the Acyl-thioester intermediate in the catalytic mechanism. Catalysis depends on proton acceptor residues H343 and C373.

It belongs to the thiolase-like superfamily. Thiolase family. Heterotetramer of two alpha chains (FadB) and two beta chains (FadA).

It localises to the cytoplasm. The catalysed reaction is an acyl-CoA + acetyl-CoA = a 3-oxoacyl-CoA + CoA. It functions in the pathway lipid metabolism; fatty acid beta-oxidation. Its function is as follows. Catalyzes the final step of fatty acid oxidation in which acetyl-CoA is released and the CoA ester of a fatty acid two carbons shorter is formed. This Yersinia enterocolitica serotype O:8 / biotype 1B (strain NCTC 13174 / 8081) protein is 3-ketoacyl-CoA thiolase.